The following is a 456-amino-acid chain: Vitamin K-dependent protein C (456 aa).

The signal sequence occupies residues methionine 1 to alanine 20. A propeptide spanning residues alanine 21 to arginine 42 is cleaved from the precursor. One can recognise a Gla domain in the interval leucine 47–aspartate 88. Residues glutamate 48, glutamate 49, glutamate 56, glutamate 58, glutamate 61, glutamate 62, glutamate 67, glutamate 68, and glutamate 71 each carry the 4-carboxyglutamate modification. The cysteines at positions 59 and 64 are disulfide-linked. 4 cysteine pairs are disulfide-bonded: cysteine 92–cysteine 111, cysteine 101–cysteine 106, cysteine 105–cysteine 120, and cysteine 122–cysteine 131. EGF-like domains follow at residues proline 97–glutamine 132 and serine 136–glutamine 176. Aspartate 113 bears the (3R)-3-hydroxyaspartate mark. A glycan (N-linked (GlcNAc...) asparagine) is linked at asparagine 139. 5 disulfides stabilise this stretch: cysteine 140–cysteine 151, cysteine 147–cysteine 160, cysteine 162–cysteine 175, cysteine 183–cysteine 318, and cysteine 237–cysteine 253. Asparagine 202 carries an N-linked (GlcNAc...) asparagine glycan. The region spanning leucine 211–arginine 445 is the Peptidase S1 domain. Histidine 252 acts as the Charge relay system in catalysis. N-linked (GlcNAc...) asparagine glycosylation is present at asparagine 289. Aspartate 298 (charge relay system) is an active-site residue. A glycan (N-linked (GlcNAc...) asparagine) is linked at asparagine 350. Cystine bridges form between cysteine 368-cysteine 382 and cysteine 393-cysteine 421. The active-site Charge relay system is the serine 397.

Belongs to the peptidase S1 family. As to quaternary structure, synthesized as a single chain precursor, which is cleaved into a light chain and a heavy chain held together by a disulfide bond. The enzyme is then activated by thrombin, which cleaves a tetradecapeptide from the amino end of the heavy chain; this reaction, which occurs at the surface of endothelial cells, is strongly promoted by thrombomodulin. In terms of processing, the vitamin K-dependent, enzymatic carboxylation of some Glu residues allows the modified protein to bind calcium. Post-translationally, the iron and 2-oxoglutarate dependent 3-hydroxylation of aspartate and asparagine is (R) stereospecific within EGF domains. As to expression, plasma; synthesized in the liver.

The protein resides in the secreted. Its subcellular location is the golgi apparatus. The protein localises to the endoplasmic reticulum. The enzyme catalyses Degradation of blood coagulation factors Va and VIIIa.. Functionally, protein C is a vitamin K-dependent serine protease that regulates blood coagulation by inactivating factors Va and VIIIa in the presence of calcium ions and phospholipids. Exerts a protective effect on the endothelial cell barrier function. This chain is Vitamin K-dependent protein C (PROC), found in Canis lupus familiaris (Dog).